The following is an 809-amino-acid chain: Phospholipase D alpha 1 (809 aa).

Positions 1 to 125 constitute a C2 domain; the sequence is MAQILLHGTL…LDGHEIDKWV (125 aa). Asp-186 is a Ca(2+) binding site. A PLD phosphodiesterase 1 domain is found at 326 to 365; sequence TMFTHHQKIVVVDSALPGGGGSDKRRIVSFVGGLDLCDGR. Residues His-331, Lys-333, and Asp-338 contribute to the active site. A 1,2-diacyl-sn-glycero-3-phosphate is bound at residue His-331. His-371 and His-405 together coordinate Ca(2+). 2 residues coordinate a 1,2-diacyl-sn-glycero-3-phosphate: Gln-521 and His-660. Residues 655–682 enclose the PLD phosphodiesterase 2 domain; the sequence is FMIYVHTKMMIVDDEYIIIGSANINQRS. Active-site residues include His-660, Lys-662, and Asp-667. Glu-721 contributes to the Ca(2+) binding site.

It belongs to the phospholipase D family. C2-PLD subfamily. Requires Ca(2+) as cofactor.

The enzyme catalyses a 1,2-diacyl-sn-glycero-3-phosphocholine + H2O = a 1,2-diacyl-sn-glycero-3-phosphate + choline + H(+). Hydrolyzes glycerol-phospholipids at the terminal phosphodiesteric bond. Plays an important role in various cellular processes. This is Phospholipase D alpha 1 (PLD1) from Vigna unguiculata (Cowpea).